A 206-amino-acid chain; its full sequence is Glycerol-3-phosphate acyltransferase (206 aa).

6 consecutive transmembrane segments (helical) span residues 6–26 (IFLA…PSGF), 57–77 (KAAL…ILIA), 86–106 (FHVI…WLNW), 118–138 (VFLG…MAVL), 143–163 (IVSL…FLSL), and 165–185 (EASF…MVLW).

It belongs to the PlsY family. In terms of assembly, probably interacts with PlsX.

The protein localises to the cell inner membrane. The catalysed reaction is an acyl phosphate + sn-glycerol 3-phosphate = a 1-acyl-sn-glycero-3-phosphate + phosphate. The protein operates within lipid metabolism; phospholipid metabolism. Functionally, catalyzes the transfer of an acyl group from acyl-phosphate (acyl-PO(4)) to glycerol-3-phosphate (G3P) to form lysophosphatidic acid (LPA). This enzyme utilizes acyl-phosphate as fatty acyl donor, but not acyl-CoA or acyl-ACP. The chain is Glycerol-3-phosphate acyltransferase from Prochlorococcus marinus (strain MIT 9211).